We begin with the raw amino-acid sequence, 383 residues long: Geranylgeranyl pyrophosphate synthase esdpD (383 aa).

Residues Lys88, Arg91, and His120 each coordinate isopentenyl diphosphate. Residues Asp150 and Asp154 each coordinate Mg(2+). Residue Arg159 participates in dimethylallyl diphosphate binding. Arg160 contributes to the isopentenyl diphosphate binding site. Dimethylallyl diphosphate-binding residues include Lys237, Thr238, and Gln271. Asp274 contributes to the Mg(2+) binding site. The dimethylallyl diphosphate site is built by Asn278, Lys288, and Lys298.

It belongs to the FPP/GGPP synthase family. Mg(2+) serves as cofactor.

The catalysed reaction is isopentenyl diphosphate + dimethylallyl diphosphate = (2E)-geranyl diphosphate + diphosphate. It catalyses the reaction isopentenyl diphosphate + (2E)-geranyl diphosphate = (2E,6E)-farnesyl diphosphate + diphosphate. The enzyme catalyses isopentenyl diphosphate + (2E,6E)-farnesyl diphosphate = (2E,6E,10E)-geranylgeranyl diphosphate + diphosphate. Its pathway is secondary metabolite biosynthesis; terpenoid biosynthesis. Geranylgeranyl pyrophosphate synthase; part of the cluster that mediates the biosynthesis of shearones, diterpenoid pyrones (DPs) which are structurally diverse meroterpenoids consisting of a diterpene linked by a pyrone, and which may exhibit a range of bioactivities. Within the pathway, esdpD takes part to the biosynthesis of the molecular scaffold by providing geranylgeranyl pyrophosphate (GGPP) to the prenyltransferase esdpC for C-3 geranylgeranylation of the alpha-pyrone. The molecular scaffold is commonly biosynthesized by a series of enzymes including the non-reducing polyketide synthase (NR-PKS) esdpA that generates an alpha-pyrone; the prenyltransferase esdpC that attaches a geranylgeranyl pyrophosphate (GGPP) produced by the GGPP synthase (GGPPS) esdpD onto the pyrone unit; the FAD-dependent monooxygenase esdpE that converts an olefin on the diterpene unit into an epoxide; and the terpene cyclase esdpB that catalyzes the cyclization reactions to give the molecular backbone shearone A. In the modification steps, esdpF oxidizes the hydroxy group to a ketone at C-3 and esdpG then attaches hydroxy groups at both C-11 and C-12. After that, esdpI hydroxylates at C-20 and esdpH hydroxylates at C-6'. The ether bridge is generated by nucleophilic attack of the hydroxy group at C-20 to the carbonyl carbon at C-3. EsdpH can also functions prior to esdpI. The different combinations of these modification enzymes lead to the production of diverse shearone derivatives, shearone I being the end product of the pathway. The alpha-ketoglutarate-dependent dioxygenase esdpJ seems not to be involved in this pathway. In Penicillium shearii (Eupenicillium shearii), this protein is Geranylgeranyl pyrophosphate synthase esdpD.